The chain runs to 136 residues: DUF35 domain-containing scaffold protein (136 aa).

Positions 25, 38, and 41 each coordinate Zn(2+).

The protein belongs to the scaffold protein DUF35 family. In terms of assembly, interacts with acetoacetyl-CoA thiolase and HMG-CoA synthase (HMGCS) that catalyzes the first and second step in the mevalonate pathway, respectively.

In terms of biological role, functions as a scaffold to connect the acetoacetyl-CoA thiolase and HMG-CoA synthase (HMGCS) dimers in the channeling thiolase/HMGCS complex, which allows for efficient coupling of the endergonic thiolase reaction with the exergonic HMGCS reaction. This is DUF35 domain-containing scaffold protein from Pyrococcus furiosus (strain ATCC 43587 / DSM 3638 / JCM 8422 / Vc1).